Here is a 308-residue protein sequence, read N- to C-terminus: Aspartate carbamoyltransferase catalytic subunit (308 aa).

The carbamoyl phosphate site is built by R59 and T60. K87 is a binding site for L-aspartate. Residues R109, H139, and Q142 each coordinate carbamoyl phosphate. R172 and R224 together coordinate L-aspartate. Positions 265 and 266 each coordinate carbamoyl phosphate.

This sequence belongs to the aspartate/ornithine carbamoyltransferase superfamily. ATCase family. As to quaternary structure, heterododecamer (2C3:3R2) of six catalytic PyrB chains organized as two trimers (C3), and six regulatory PyrI chains organized as three dimers (R2).

The enzyme catalyses carbamoyl phosphate + L-aspartate = N-carbamoyl-L-aspartate + phosphate + H(+). It participates in pyrimidine metabolism; UMP biosynthesis via de novo pathway; (S)-dihydroorotate from bicarbonate: step 2/3. Functionally, catalyzes the condensation of carbamoyl phosphate and aspartate to form carbamoyl aspartate and inorganic phosphate, the committed step in the de novo pyrimidine nucleotide biosynthesis pathway. This Streptococcus thermophilus (strain ATCC BAA-491 / LMD-9) protein is Aspartate carbamoyltransferase catalytic subunit.